Here is a 368-residue protein sequence, read N- to C-terminus: uncharacterized protein (368 aa).

In terms of domain architecture, Response regulatory spans 3–120 (KILLADDERI…QIISSLEEII (118 aa)). Asp-55 is subject to 4-aspartylphosphate. The HTH araC/xylS-type domain occupies 259-361 (SKMIRLIADE…GLTPSEFRRK (103 aa)). DNA-binding regions (H-T-H motif) lie at residues 278–299 (WAAK…KQET) and 327–351 (VSEI…KKYT).

Phosphorylated by YesM.

It localises to the cytoplasm. Functionally, member of the two-component regulatory system YesM/YesN. This is an uncharacterized protein from Bacillus subtilis (strain 168).